Consider the following 134-residue polypeptide: Small ribosomal subunit protein uS11 (134 aa).

This sequence belongs to the universal ribosomal protein uS11 family. Part of the 30S ribosomal subunit. Interacts with proteins S7 and S18. Binds to IF-3.

Located on the platform of the 30S subunit, it bridges several disparate RNA helices of the 16S rRNA. Forms part of the Shine-Dalgarno cleft in the 70S ribosome. In Variovorax paradoxus (strain S110), this protein is Small ribosomal subunit protein uS11.